We begin with the raw amino-acid sequence, 349 residues long: Terpene cyclase janA (349 aa).

Residue N80 is glycosylated (N-linked (GlcNAc...) asparagine). A run of 6 helical transmembrane segments spans residues L81–L101, L116–I136, I155–L175, L189–Y209, I223–A243, and V308–L328.

This sequence belongs to the membrane-bound ascI terpene cyclase family.

It localises to the membrane. The protein operates within secondary metabolite biosynthesis. In terms of biological role, part of the gene cluster that mediates the biosynthesis of the indole diterpenes janthitremanes such as shearinine K or shearinine A. The geranylgeranyl diphosphate (GGPP) synthase janG catalyzes the first step in janthitremane biosynthesis via conversion of farnesyl pyrophosphate and isopentyl pyrophosphate into geranylgeranyl pyrophosphate (GGPP). Condensation of indole-3-glycerol phosphate with GGPP by the prenyl transferase janC then forms 3-geranylgeranylindole (3-GGI). Epoxidation by the FAD-dependent monooxygenase janM leads to a epoxidized-GGI that is substrate of the terpene cyclase janB for cyclization to yield paspaline. Paspaline is subsequently converted to 13-desoxypaspaline by the cytochrome P450 monooxygenase janP, via beta-PC-M6 in a series of alpha-face oxidations. The cytochrome P450 monooxygenase janQ is proposed to carry out sequential beta-face oxidation steps at C-7 and C-13 of 13-desoxypaspaline to form paspalicine and paspalinine respectively. The indole diterpene prenyltransferase janD may then convert paspalinine into shearinine K which is substrate of janO and/or additional enzymes for oxidation and cyclization to generate shearinine A. The protein is Terpene cyclase janA of Penicillium janthinellum (Penicillium vitale).